The chain runs to 395 residues: Chorismate synthase (395 aa).

NADP(+) is bound by residues Arg40 and Arg46. FMN is bound by residues 137-139 (RSS), Gly308, 323-327 (KPLPT), and Arg349.

This sequence belongs to the chorismate synthase family. As to quaternary structure, homotetramer. It depends on FMNH2 as a cofactor.

The enzyme catalyses 5-O-(1-carboxyvinyl)-3-phosphoshikimate = chorismate + phosphate. It participates in metabolic intermediate biosynthesis; chorismate biosynthesis; chorismate from D-erythrose 4-phosphate and phosphoenolpyruvate: step 7/7. In terms of biological role, catalyzes the anti-1,4-elimination of the C-3 phosphate and the C-6 proR hydrogen from 5-enolpyruvylshikimate-3-phosphate (EPSP) to yield chorismate, which is the branch point compound that serves as the starting substrate for the three terminal pathways of aromatic amino acid biosynthesis. This reaction introduces a second double bond into the aromatic ring system. This is Chorismate synthase from Gloeobacter violaceus (strain ATCC 29082 / PCC 7421).